Here is a 291-residue protein sequence, read N- to C-terminus: ATP synthase gamma chain 2 (291 aa).

The interval 187-208 is disordered; it reads LLPHPDKDESQDSKPNDATSRW. Basic and acidic residues predominate over residues 190–201; that stretch reads HPDKDESQDSKP.

It belongs to the ATPase gamma chain family. In terms of assembly, F-type ATPases have 2 components, CF(1) - the catalytic core - and CF(0) - the membrane proton channel. CF(1) has five subunits: alpha(3), beta(3), gamma(1), delta(1), epsilon(1). CF(0) has three main subunits: a, b and c.

It is found in the cell inner membrane. Its function is as follows. Produces ATP from ADP in the presence of a proton gradient across the membrane. The gamma chain is believed to be important in regulating ATPase activity and the flow of protons through the CF(0) complex. In Photobacterium profundum (strain SS9), this protein is ATP synthase gamma chain 2.